Consider the following 361-residue polypeptide: MKKTLAALIVGAFAASAANAAVVYNNEGTNVELGGRLSIIAEQSNSTVDNQKQQHGALRNQGSRFHIKATHNFGDGFYAQGYLETRFVTKASENGSDNFGDITSKYAYVTLGNKAFGEVKLGRAKTIADGITSAEDKEYGVLNNSDYIPTSGNTVGYTFKGIDGLVLGANYLLAQKREGAKGENKRPNDKAGEVRIGEINNGIQVGAKYDANDIVAKIAYGRTNYKYNESDEHKQQLNGVLATLGYRFSDLGLLVSLDSGYAKTKNYKIKHEKRYFVSPGFQYELMEDTNVYGNFKYERTSVDQGEKTREQAVLFGVDHKLHKQLLTYIEGAYARTRTTETGKGVKTEKEKSVGVGLRVYF.

The signal sequence occupies residues 1 to 20; that stretch reads MKKTLAALIVGAFAASAANA.

Belongs to the Gram-negative porin family. In terms of assembly, homotrimer.

The protein resides in the cell outer membrane. Forms pores that allow passive diffusion of small molecules across the outer membrane. This Haemophilus influenzae protein is Outer membrane protein P2 (ompP2).